Consider the following 130-residue polypeptide: Small ribosomal subunit protein uS8 (130 aa).

Belongs to the universal ribosomal protein uS8 family. In terms of assembly, part of the 30S ribosomal subunit.

Functionally, one of the primary rRNA binding proteins, it binds directly to 16S rRNA central domain where it helps coordinate assembly of the platform of the 30S subunit. In Methanosarcina mazei (strain ATCC BAA-159 / DSM 3647 / Goe1 / Go1 / JCM 11833 / OCM 88) (Methanosarcina frisia), this protein is Small ribosomal subunit protein uS8.